A 29-amino-acid chain; its full sequence is Photosystem I reaction center subunit XII (29 aa).

A helical membrane pass occupies residues 7-24 (FVALLLALVPAVLAYRLG).

This sequence belongs to the PsaM family.

The protein resides in the cellular thylakoid membrane. This is Photosystem I reaction center subunit XII from Synechococcus sp. (strain ATCC 27144 / PCC 6301 / SAUG 1402/1) (Anacystis nidulans).